A 423-amino-acid polypeptide reads, in one-letter code: Aspartic protease-like protein pytH (423 aa).

The first 16 residues, Met-1–Ala-16, serve as a signal peptide directing secretion. Residues Thr-38–Ala-416 form the Peptidase A1 domain. Asp-56 is an active-site residue. 6 N-linked (GlcNAc...) asparagine glycosylation sites follow: Asn-88, Asn-97, Asn-168, Asn-196, Asn-231, and Asn-279. The active site involves Asp-291. An N-linked (GlcNAc...) asparagine glycan is attached at Asn-330. Cys-338 and Cys-377 are disulfide-bonded.

This sequence belongs to the peptidase A1 family.

It participates in secondary metabolite biosynthesis. Its function is as follows. Aspartic protease-like protein; part of the gene cluster that mediates the biosynthesis of pyranterreones, a family of antioxidative compounds. The first step of pyranonigrins biosynthesis is performed by the hybrid PKS-NRPS synthetase pytA that condenses 4 malonyl-CoA units ato the acetyl starter unit by the modular PKS of pytA. The acyl chain is then connected to an L-serine through the amide bond by the modular NRPS of pytA. A tetramic acid is formed and released from the PKS-NRPS pytA to give pyranterreone 5 with the help of the thioesterase pytI. Pyranterreone 5 could be methylated by pytC to afford pyranterreone 6. Both pyranterreones 5 and 6 are subsequently oxidized by the FAD-linked oxidoreductase pytB and the cytochrome P450 monooxygenase pytD to form the fused gamma-pyrone core, resulting in pyranterreones 7 and 11, respectively. The hydroxy group at C-8 of pyranterreones 7 and 11 are dehydrated by the aspartyl protease pytH to form a delta-7 double bond to give pyranterreones 3 and 1, 2 accordingly. The exo-methylene of pyranterreone 3 could be reduced into a pendant methyl by reductase pytE to provide pyranterreone 4, also known as cordylactam. Pyranterreone 4 can be reconverted to pyranterreone 3 through pytB-catalyzed dehydrogenation or further oxidized to pyranterreones 9 and 10. The polypeptide is Aspartic protease-like protein pytH (Aspergillus terreus (strain NIH 2624 / FGSC A1156)).